The chain runs to 152 residues: MEAQHLHAKPHAEGEWSTGFCDCFSDCKNCCITFWCPCITFGQVAEIVDRGSTSCGTAGALYALIAVVTGCACIYSCFYRGKMRAQYNIKGDDCTDCLKHFCCELCSLTQQYRELKHRGYDMSLGWAGNVERQQNQGGVAMGAPVFQGGMTR.

The helical transmembrane segment at 57 to 79 (TAGALYALIAVVTGCACIYSCFY) threads the bilayer.

This sequence belongs to the cornifelin family. As to quaternary structure, homooligomer. Expressed in roots, leaves, shoots, stems, flowers and siliques. In leaves, restricted mainly to the vascular tissue. Expressed in all cells in the root tip, in the vascular tissue and the epidermis in the elongation zone, and only in the epidermal cells in the root hair zone.

The protein localises to the cell membrane. Zinc transporter acting in both zinc extrusion and long-distance zinc transport. Involved in the loading of zinc into the xyleme and in the detoxification of excess zinc at the epidermal cells. Acts independently from the zinc transporters HMA2 and HMA4. May be also involved in cadmium resistance. In Arabidopsis thaliana (Mouse-ear cress), this protein is Protein PLANT CADMIUM RESISTANCE 2 (PCR2).